A 454-amino-acid chain; its full sequence is Mitochondrial distribution and morphology protein 10 (454 aa).

It belongs to the MDM10 family. In terms of assembly, component of the ER-mitochondria encounter structure (ERMES) or MDM complex, composed of MMM1, MDM10, MDM12 and MDM34. Associates with the mitochondrial outer membrane sorting assembly machinery SAM(core) complex.

The protein resides in the mitochondrion outer membrane. Its function is as follows. Component of the ERMES/MDM complex, which serves as a molecular tether to connect the endoplasmic reticulum and mitochondria. Components of this complex are involved in the control of mitochondrial shape and protein biogenesis and may function in phospholipid exchange. MDM10 is involved in the late assembly steps of the general translocase of the mitochondrial outer membrane (TOM complex). Functions in the TOM40-specific route of the assembly of outer membrane beta-barrel proteins, including the association of TOM40 with the receptor TOM22 and small TOM proteins. Can associate with the SAM(core) complex as well as the MDM12-MMM1 complex, both involved in late steps of the major beta-barrel assembly pathway, that is responsible for biogenesis of all outer membrane beta-barrel proteins. May act as a switch that shuttles between both complexes and channels precursor proteins into the TOM40-specific pathway. Plays a role in mitochondrial morphology and in the inheritance of mitochondria. This chain is Mitochondrial distribution and morphology protein 10, found in Candida tropicalis (strain ATCC MYA-3404 / T1) (Yeast).